Here is a 429-residue protein sequence, read N- to C-terminus: L-dopachrome tautomerase yellow-f (429 aa).

The first 23 residues, 1–23 (MLSLDVLLLCAISGFQLLISADG), serve as a signal peptide directing secretion. N-linked (GlcNAc...) asparagine glycans are attached at residues N133 and N372.

It belongs to the major royal jelly protein family.

The protein localises to the secreted. The catalysed reaction is L-dopachrome = 5,6-dihydroxyindole-2-carboxylate. It participates in pigment biosynthesis; melanin biosynthesis. Tautomerization of L-dopachrome with decarboxylation to give 5,6-dihydroxyindole (DHI). Also catalyzes the tautomerization of the methyl ester of L-dopachrome and dopamine chrome. May play a role in melanization reactions during late pupal and adult stages. May play a role in melanization reactions during larval and early pupal stages. This chain is L-dopachrome tautomerase yellow-f, found in Drosophila melanogaster (Fruit fly).